The chain runs to 312 residues: R2-like ligand binding oxidase (312 aa).

3 residues coordinate Mn(2+): Glu68, Glu101, and His104. A cross-link (3-(O4'-tyrosyl)-valine (Val-Tyr)) is located at residues 71-162; it reads VTQDIQPFMA…AAQVRASVTY (92 aa). Position 101 (Glu101) interacts with Fe cation. Positions 167, 202, and 205 each coordinate Fe cation.

Belongs to the ribonucleoside diphosphate reductase small chain family. R2-like ligand binding oxidase subfamily. Homodimer. Fe cation is required as a cofactor. Mn(2+) serves as cofactor.

Probable oxidase that might be involved in lipid metabolism. The sequence is that of R2-like ligand binding oxidase from Mycolicibacterium vanbaalenii (strain DSM 7251 / JCM 13017 / BCRC 16820 / KCTC 9966 / NRRL B-24157 / PYR-1) (Mycobacterium vanbaalenii).